The primary structure comprises 1791 residues: Protein TIC 214 (1791 aa).

The next 6 membrane-spanning stretches (helical) occupy residues 19–39 (IINS…FSIG), 68–88 (FIAG…HLAL), 91–111 (PHTI…WNNH), 133–153 (VFLN…SSML), 176–196 (VGWL…LVWI), and 227–247 (IFSI…PSPI). Residues 1492–1511 (ASQVELESDKENKKNPESAL) form a disordered region. Positions 1498–1511 (ESDKENKKNPESAL) are enriched in basic and acidic residues.

Belongs to the TIC214 family. Part of the Tic complex.

It localises to the plastid. It is found in the chloroplast inner membrane. Its function is as follows. Involved in protein precursor import into chloroplasts. May be part of an intermediate translocation complex acting as a protein-conducting channel at the inner envelope. This chain is Protein TIC 214, found in Barbarea verna (Land cress).